Consider the following 137-residue polypeptide: Large ribosomal subunit protein uL16c (137 aa).

The protein belongs to the universal ribosomal protein uL16 family. In terms of assembly, part of the 50S ribosomal subunit.

The protein localises to the plastid. The protein resides in the chloroplast. The chain is Large ribosomal subunit protein uL16c from Bigelowiella natans (Pedinomonas minutissima).